The sequence spans 266 residues: Lipooligosaccharide biosynthesis protein lic2B (266 aa).

The protein belongs to the glycosyltransferase 25 family.

Involved in extracellular lipooligosaccharide (LOS) biosynthesis and virulence expression. Involved in the synthesis of the oligosaccharide moiety of the LOS molecule by adding GalNAc. The chain is Lipooligosaccharide biosynthesis protein lic2B (lic2B) from Haemophilus influenzae.